Consider the following 488-residue polypeptide: Zinc metalloproteinase-disintegrin 8 (488 aa).

The N-terminal stretch at 1–20 (MIQVLLVTICLAVFPYQGSS) is a signal peptide. Residues 21–191 (IILESGNVND…KASQLNLPPE (171 aa)) constitute a propeptide that is removed on maturation. Residues 198–396 (TYIELVVVAD…STTRCLHNEP (199 aa)) enclose the Peptidase M12B domain. Ca(2+) is bound by residues Glu-201 and Asp-285. The N-linked (GlcNAc...) asparagine glycan is linked to Asn-296. 3 disulfides stabilise this stretch: Cys-309–Cys-391, Cys-349–Cys-373, and Cys-351–Cys-356. His-334 is a binding site for Zn(2+). Glu-335 is an active-site residue. His-338 and His-344 together coordinate Zn(2+). Cys-391, Asn-394, Asn-409, Glu-413, Glu-416, and Asp-419 together coordinate Ca(2+). One can recognise a Disintegrin domain in the interval 404–488 (PPFCGNYFKE…ADCPRNGLYG (85 aa)). 7 cysteine pairs are disulfide-bonded: Cys-407/Cys-426, Cys-418/Cys-436, Cys-420/Cys-431, Cys-430/Cys-453, Cys-444/Cys-450, Cys-449/Cys-474, and Cys-462/Cys-481. Residues 466–468 (RGD) carry the Cell attachment site motif.

This sequence belongs to the venom metalloproteinase (M12B) family. P-II subfamily. Zn(2+) is required as a cofactor. Expressed by the venom gland.

It is found in the secreted. In terms of biological role, inhibits ADP-induced platelet aggregation (probably by binding integrin alpha-IIb/beta-3 (ITGA2B/ITGB3)) and degrades fibrinogen. The polypeptide is Zinc metalloproteinase-disintegrin 8 (Crotalus adamanteus (Eastern diamondback rattlesnake)).